The sequence spans 159 residues: Ribosomal RNA large subunit methyltransferase H (159 aa).

Residues Leu76, Gly108, and 127–132 (FSRMTF) contribute to the S-adenosyl-L-methionine site.

The protein belongs to the RNA methyltransferase RlmH family. As to quaternary structure, homodimer.

The protein localises to the cytoplasm. The enzyme catalyses pseudouridine(1915) in 23S rRNA + S-adenosyl-L-methionine = N(3)-methylpseudouridine(1915) in 23S rRNA + S-adenosyl-L-homocysteine + H(+). Functionally, specifically methylates the pseudouridine at position 1915 (m3Psi1915) in 23S rRNA. The protein is Ribosomal RNA large subunit methyltransferase H of Clostridioides difficile (strain 630) (Peptoclostridium difficile).